A 151-amino-acid polypeptide reads, in one-letter code: MKAVVLTLAVLFLTGSQARHFWQQDDPQSPWDRVKDLVTVYVDAVKDGGREYVAQFEASALGKQLNLKLLDNWDTLGSTITKLREQIGPVTQEFWDNLEKETEVLRQEMSKDLEEVKQKVQPYLDDFQKKWQEEVELYRQKVAPLGTELRE.

The signal sequence occupies residues 1-18 (MKAVVLTLAVLFLTGSQA). A propeptide spanning residues 19-24 (RHFWQQ) is cleaved from the precursor. A run of 2 repeats spans residues 67 to 88 (LKLL…EQIG) and 89 to 110 (PVTQ…QEMS). Residues 67-143 (LKLLDNWDTL…EVELYRQKVA (77 aa)) are 4 X approximate tandem repeats. A Methionine sulfoxide modification is found at Met-109. One copy of the 3; half-length repeat lies at 111–121 (KDLEEVKQKVQ). Residues 122-143 (PYLDDFQKKWQEEVELYRQKVA) form repeat 4.

Belongs to the apolipoprotein A1/A4/E family. Homodimer. Interacts with APOA1BP and CLU. Component of a sperm activating protein complex (SPAP), consisting of APOA1, an immunoglobulin heavy chain, an immunoglobulin light chain and albumin. Interacts with NDRG1. Interacts with SCGB3A2. Interacts with NAXE and YJEFN3. Post-translationally, glycosylated. Palmitoylated. In terms of processing, phosphorylation sites are present in the extracellular medium. Major protein of plasma HDL, also found in chylomicrons.

It localises to the secreted. Participates in the reverse transport of cholesterol from tissues to the liver for excretion by promoting cholesterol efflux from tissues and by acting as a cofactor for the lecithin cholesterol acyltransferase (LCAT). As part of the SPAP complex, activates spermatozoa motility. This is Apolipoprotein A-I (APOA1) from Panthera tigris altaica (Siberian tiger).